Reading from the N-terminus, the 199-residue chain is Pre-histone-like nucleoprotein (199 aa).

Ser-2 is subject to N-acetylserine; by host. A propeptide spanning residues 2–23 is cleaved from the precursor; the sequence is SILISPSDNTGWGLGTGKMYGG. N6-acetyllysine; by host is present on Lys-26. The short motif at 189 to 199 is the Nuclear localization signal element; sequence RRKASVRRRRT.

The protein belongs to the adenoviridae histone-like nucleoprotein family. Interacts with the core-capsid bridging protein; this interaction bridges the virus core to the capsid. Interacts with host NPM1; this interaction might play a role in placing the pre-histone-like nucleoprotein on the viral DNA or regulating viral gene expression. Interacts with host HMGB1; this interaction inhibits host immune response. In terms of processing, cleaved near the N-terminus by the viral protease during virion maturation to form the mature protein.

Its subcellular location is the virion. The protein resides in the host nucleus. It localises to the host nucleolus. In terms of biological role, plays a role in the inhibition of host immune response within the nucleus. Interacts with cellular nucleosomes and immobilizes the host immune danger signal HMGB1 on chromatin. In turn, prevents HMGB1 release out of the cell and thus decreases inflammation. Also plays a role in the wrapping and condensation of the viral DNA. May also promote viral genome import into the nucleus. The protein is Pre-histone-like nucleoprotein of Murine adenovirus A serotype 1 (MAdV-1).